Here is a 381-residue protein sequence, read N- to C-terminus: L-lactate dehydrogenase (381 aa).

The FMN hydroxy acid dehydrogenase domain maps to 1-380 (MIISSANDYR…TRDALVDLSK (380 aa)). Tyr-24 lines the substrate pocket. FMN-binding residues include Ser-106 and Gln-127. Position 129 (Tyr-129) interacts with substrate. Residue Thr-155 coordinates FMN. Substrate is bound at residue Arg-164. Residue Lys-251 coordinates FMN. His-275 acts as the Proton acceptor in catalysis. Arg-278 contacts substrate. 306–330 (DSGIRNGLDIVRMLALGADATMLGR) contacts FMN.

It belongs to the FMN-dependent alpha-hydroxy acid dehydrogenase family. Requires FMN as cofactor.

The protein resides in the cell inner membrane. The catalysed reaction is (S)-lactate + A = pyruvate + AH2. Catalyzes the conversion of L-lactate to pyruvate. Is coupled to the respiratory chain. The sequence is that of L-lactate dehydrogenase from Actinobacillus pleuropneumoniae serotype 5b (strain L20).